Here is a 119-residue protein sequence, read N- to C-terminus: EF-hand calcium-binding domain-containing protein 2 (119 aa).

The signal sequence occupies residues 1–22; it reads MKVAVVLIVVLVVMMIGQETDS. Residues 82-117 form the EF-hand domain; that stretch reads VDDNGFVEFKATYDVDGDGVVQVEEYETVVELTENL. The Ca(2+) site is built by D95, D97, D99, and E106.

As to expression, component of the acid-soluble organic matrix of calcified layers of the shell (at protein level).

The protein resides in the secreted. This chain is EF-hand calcium-binding domain-containing protein 2, found in Lottia gigantea (Giant owl limpet).